Reading from the N-terminus, the 130-residue chain is L-aspartate semialdehyde sulfurtransferase iron-sulfur subunit (130 aa).

4Fe-4S ferredoxin-type domains follow at residues 72-101 (RPIH…FDET) and 102-130 (WSLC…KLGE). 8 residues coordinate [4Fe-4S] cluster: C81, C84, C87, C91, C111, C114, C117, and C121.

In terms of assembly, may form a complex with MA_1821. [4Fe-4S] cluster serves as cofactor.

It participates in amino-acid biosynthesis. Functionally, required for O-acetylhomoserine sulfhydrylase (OAHS)-independent homocysteine (Hcy) biosynthesis. Together with MA_1821, catalyzes the condensation of sulfide with aspartate semialdehyde to generate homocysteine. May be involved in the reduction of the disulfide formed in MA_1821. The chain is L-aspartate semialdehyde sulfurtransferase iron-sulfur subunit from Methanosarcina acetivorans (strain ATCC 35395 / DSM 2834 / JCM 12185 / C2A).